Consider the following 137-residue polypeptide: ATP synthase epsilon chain, chloroplastic (137 aa).

This sequence belongs to the ATPase epsilon chain family. In terms of assembly, F-type ATPases have 2 components, CF(1) - the catalytic core - and CF(0) - the membrane proton channel. CF(1) has five subunits: alpha(3), beta(3), gamma(1), delta(1), epsilon(1). CF(0) has three main subunits: a, b and c.

It localises to the plastid. It is found in the chloroplast thylakoid membrane. Functionally, produces ATP from ADP in the presence of a proton gradient across the membrane. This is ATP synthase epsilon chain, chloroplastic from Agrostis stolonifera (Creeping bentgrass).